A 426-amino-acid polypeptide reads, in one-letter code: Phosphomethylpyrimidine synthase (426 aa).

Substrate-binding positions include N65, M94, Y123, H162, 184–186 (SRG), 225–228 (DGMR), and E264. H268 contacts Zn(2+). Y291 lines the substrate pocket. H332 is a Zn(2+) binding site. Residues C408, C411, and C415 each contribute to the [4Fe-4S] cluster site.

The protein belongs to the ThiC family. The cofactor is [4Fe-4S] cluster.

It carries out the reaction 5-amino-1-(5-phospho-beta-D-ribosyl)imidazole + S-adenosyl-L-methionine = 4-amino-2-methyl-5-(phosphooxymethyl)pyrimidine + CO + 5'-deoxyadenosine + formate + L-methionine + 3 H(+). Its pathway is cofactor biosynthesis; thiamine diphosphate biosynthesis. Functionally, catalyzes the synthesis of the hydroxymethylpyrimidine phosphate (HMP-P) moiety of thiamine from aminoimidazole ribotide (AIR) in a radical S-adenosyl-L-methionine (SAM)-dependent reaction. In Methanococcus maripaludis (strain C6 / ATCC BAA-1332), this protein is Phosphomethylpyrimidine synthase.